Here is an 87-residue protein sequence, read N- to C-terminus: Retinal rod rhodopsin-sensitive cGMP 3',5'-cyclic phosphodiesterase subunit gamma (87 aa).

At Met-1 the chain carries N-acetylmethionine. The span at 1–12 (MNLEPPKGEIRS) shows a compositional bias: basic and acidic residues. Residues 1-55 (MNLEPPKGEIRSATRVIGGPVTPRKGPPKFKQRQTRQFKSKPPKKGVQGFGDDIP) form a disordered region. Basic residues predominate over residues 26-44 (GPPKFKQRQTRQFKSKPPK).

The protein belongs to the rod/cone cGMP-PDE gamma subunit family. In terms of assembly, oligomer composed of two catalytic chains (alpha and beta), an inhibitory chain (gamma) and the delta chain.

It carries out the reaction 3',5'-cyclic GMP + H2O = GMP + H(+). Its function is as follows. Participates in processes of transmission and amplification of the visual signal. cGMP-PDEs are the effector molecules in G-protein-mediated phototransduction in vertebrate rods and cones. The chain is Retinal rod rhodopsin-sensitive cGMP 3',5'-cyclic phosphodiesterase subunit gamma (Pde6g) from Mus musculus (Mouse).